The sequence spans 1121 residues: Pleckstrin homology domain-containing family A member 7 (1121 aa).

2 consecutive WW domains span residues 9–42 (DTLP…HPRT) and 54–87 (SDLP…HPVT). The tract at residues 105-137 (PHMSKQDRNQRPSSMVSETSTAGTASTLEAKPG) is disordered. The segment covering 115–131 (RPSSMVSETSTAGTAST) has biased composition (polar residues). A PH domain is found at 164–282 (PVVVRGWLHK…WVRAMNQAAQ (119 aa)). The disordered stretch occupies residues 299–514 (QAVPQANHTE…LKMSSEERRA (216 aa)). Composition is skewed to basic and acidic residues over residues 308–356 (ESCH…EGKR) and 437–446 (HWARAQKGDS). Over residues 460–475 (PGQSLSFPENYQTLPK) the composition is skewed to polar residues. The span at 497–514 (YAQDRASHLKMSSEERRA) shows a compositional bias: basic and acidic residues. Phosphoserine occurs at positions 536, 545, 569, 604, 608, and 612. Positions 538–696 (TAPICLGSPE…AESDTDVKLS (159 aa)) are interaction with CTNND1. Residues 547-632 (EFTDQGRSRS…NSSHVDRRSM (86 aa)) are disordered. Positions 567 to 582 (PPSPSDIPPPGPPRVF) are enriched in pro residues. The span at 589–605 (TPAERVTVKPPDQRRSV) shows a compositional bias: basic and acidic residues. A coiled-coil region spans residues 700–801 (EQDRVLQDLE…LQEQHRRAFF (102 aa)). Disordered regions lie at residues 841-876 (RKTV…VRTP) and 888-971 (YVPY…ELGQ). A phosphoserine mark is found at S858, S860, and S867. The span at 861 to 871 (KPPPQPSPPTS) shows a compositional bias: pro residues. T870 carries the post-translational modification Phosphothreonine. A phosphoserine mark is found at S871, S903, and S907. A compositionally biased stretch (pro residues) spans 933-942 (DQPPAVPPLP). Basic and acidic residues predominate over residues 958–969 (RQSDERKRDREL). Phosphoserine is present on S986. Disordered regions lie at residues 1003 to 1028 (GLVG…RLQQ) and 1082 to 1121 (RHQK…GSVC). Residues 1067–1094 (QRGKMSAEEQLERMKRHQKALVRERKRT) are a coiled coil. Basic residues predominate over residues 1082–1094 (RHQKALVRERKRT).

As to quaternary structure, interacts with CAMSAP3 and CTNND1. Interacts (via WW domains) with TSPAN33 (via cytoplasmic domain) and with PDZD11; the interaction with TSPAN33 is dependent on PDZD11 being bound to PLEKHA7 and facilitates the docking of ADAM10 to zonula adherens through interaction of TSPAN33 with ADAM10.

The protein localises to the cell junction. It localises to the adherens junction. Its subcellular location is the cytoplasm. It is found in the cytoskeleton. The protein resides in the microtubule organizing center. The protein localises to the centrosome. Functionally, required for zonula adherens biogenesis and maintenance. Acts via its interaction with CAMSAP3, which anchors microtubules at their minus-ends to zonula adherens, leading to the recruitment of KIFC3 kinesin to the junctional site. Mediates docking of ADAM10 to zonula adherens through a PDZD11-dependent interaction with the ADAM10-binding protein TSPAN33. The protein is Pleckstrin homology domain-containing family A member 7 (PLEKHA7) of Homo sapiens (Human).